The following is a 304-amino-acid chain: MIYTMKKVHALWVSICLMLNLAPAPLNADSEEDEEYTIITDTELPPLKLMHSFCAFKPDDGPCKAIMKRFFFNIFTRQCEEFIYGGCGGNQNRFESMEECKKVCTRDNVHRIIQTALQQEKPDFCFLEEDPGICRGYITRYFYNNQSKQCERFKYGGCLGNMNNFETLEECKNTCEDGLNGFQVDNYGTQLNAVNNSQTPQSTKVPSFFEFHGPSWCLAPADRGLCRANENRFYYNSVIGKCRPFKYSGCGGNENNFTSKRECLRACKKGFIQRISKGGLIKTKRKRKKQRVKIAYEEVFVKNM.

An N-terminal signal peptide occupies residues 1–28; that stretch reads MIYTMKKVHALWVSICLMLNLAPAPLNA. 2 BPTI/Kunitz inhibitor domains span residues 54 to 104 and 125 to 175; these read CAFK…KKVC and CFLE…KNTC. Cystine bridges form between Cys54–Cys104, Cys63–Cys87, Cys79–Cys100, Cys125–Cys175, Cys134–Cys158, and Cys150–Cys171. Asn145 carries an N-linked (GlcNAc...) asparagine glycan. The N-linked (GlcNAc...) asparagine glycan is linked to Asn195. The BPTI/Kunitz inhibitor 3 domain maps to 217 to 267; sequence CLAPADRGLCRANENRFYYNSVIGKCRPFKYSGCGGNENNFTSKRECLRAC. 3 disulfides stabilise this stretch: Cys217–Cys267, Cys226–Cys250, and Cys242–Cys263. N-linked (GlcNAc...) asparagine glycosylation occurs at Asn256.

O-glycosylated.

It is found in the secreted. Its function is as follows. Inhibits factor X (X(a)) directly and, in a Xa-dependent way, inhibits VIIa/tissue factor activity, presumably by forming a quaternary Xa/LACI/VIIa/TF complex. It possesses an antithrombotic action and also the ability to associate with lipoproteins in plasma. This is Tissue factor pathway inhibitor (TFPI) from Macaca mulatta (Rhesus macaque).